Consider the following 511-residue polypeptide: Centrosomal protein CCDC61 (511 aa).

A head domain region spans residues 1–144 (MEVGTVVQEE…PLPLPYLGKP (144 aa)). Positions 147-272 (AELQKEIRAL…RVKSLTTELA (126 aa)) form a coiled coil. Disordered regions lie at residues 306 to 403 (TRVG…SREP) and 447 to 486 (RGRK…SMDT). A compositionally biased stretch (basic and acidic residues) spans 315-335 (GSRERIEDRGRRSEERVRRAD). The segment covering 338–352 (GSRNCITRPSPSPTG) has biased composition (polar residues). Positions 366-378 (DRQRRQKEAELKS) are enriched in basic and acidic residues.

The protein belongs to the CCDC61 family. As to quaternary structure, forms homodimers (via head domain).

It is found in the cytoplasm. The protein localises to the cytoskeleton. It localises to the microtubule organizing center. The protein resides in the centrosome. Its subcellular location is the centriolar satellite. It is found in the cilium basal body. Functionally, microtubule-binding centrosomal protein required for centriole cohesion, independently of the centrosome-associated protein/CEP250 and rootletin/CROCC linker. In interphase, required for anchoring microtubule at the mother centriole subdistal appendages and for centrosome positioning. During mitosis, may be involved in spindle assembly and chromatin alignment by regulating the organization of spindle microtubules into a symmetrical structure. Plays a non-essential role in ciliogenesis. The protein is Centrosomal protein CCDC61 of Danio rerio (Zebrafish).